Here is a 229-residue protein sequence, read N- to C-terminus: Urease accessory protein UreF (229 aa).

Belongs to the UreF family. UreD, UreF and UreG form a complex that acts as a GTP-hydrolysis-dependent molecular chaperone, activating the urease apoprotein by helping to assemble the nickel containing metallocenter of UreC. The UreE protein probably delivers the nickel.

Its subcellular location is the cytoplasm. In terms of biological role, required for maturation of urease via the functional incorporation of the urease nickel metallocenter. The sequence is that of Urease accessory protein UreF from Nostoc sp. (strain PCC 7120 / SAG 25.82 / UTEX 2576).